A 152-amino-acid chain; its full sequence is 6,7-dimethyl-8-ribityllumazine synthase (152 aa).

5-amino-6-(D-ribitylamino)uracil is bound by residues Phe-21, 55-57, and 79-81; these read AFE and CVI. Residue 84–85 participates in (2S)-2-hydroxy-3-oxobutyl phosphate binding; that stretch reads AT. His-87 (proton donor) is an active-site residue. Residue Phe-112 coordinates 5-amino-6-(D-ribitylamino)uracil. A (2S)-2-hydroxy-3-oxobutyl phosphate-binding site is contributed by Arg-126.

This sequence belongs to the DMRL synthase family. In terms of assembly, forms an icosahedral capsid composed of 60 subunits, arranged as a dodecamer of pentamers.

It catalyses the reaction (2S)-2-hydroxy-3-oxobutyl phosphate + 5-amino-6-(D-ribitylamino)uracil = 6,7-dimethyl-8-(1-D-ribityl)lumazine + phosphate + 2 H2O + H(+). It participates in cofactor biosynthesis; riboflavin biosynthesis; riboflavin from 2-hydroxy-3-oxobutyl phosphate and 5-amino-6-(D-ribitylamino)uracil: step 1/2. In terms of biological role, catalyzes the formation of 6,7-dimethyl-8-ribityllumazine by condensation of 5-amino-6-(D-ribitylamino)uracil with 3,4-dihydroxy-2-butanone 4-phosphate. This is the penultimate step in the biosynthesis of riboflavin. This chain is 6,7-dimethyl-8-ribityllumazine synthase, found in Staphylococcus carnosus (strain TM300).